The sequence spans 185 residues: Ribosome-recycling factor (185 aa).

Belongs to the RRF family.

Its subcellular location is the cytoplasm. Responsible for the release of ribosomes from messenger RNA at the termination of protein biosynthesis. May increase the efficiency of translation by recycling ribosomes from one round of translation to another. This is Ribosome-recycling factor from Glaesserella parasuis serovar 5 (strain SH0165) (Haemophilus parasuis).